The primary structure comprises 270 residues: Putative phosphoenolpyruvate synthase regulatory protein (270 aa).

An ADP-binding site is contributed by 151–158 (GVSRCGKT).

It belongs to the pyruvate, phosphate/water dikinase regulatory protein family. PSRP subfamily.

It carries out the reaction [pyruvate, water dikinase] + ADP = [pyruvate, water dikinase]-phosphate + AMP + H(+). The catalysed reaction is [pyruvate, water dikinase]-phosphate + phosphate + H(+) = [pyruvate, water dikinase] + diphosphate. Functionally, bifunctional serine/threonine kinase and phosphorylase involved in the regulation of the phosphoenolpyruvate synthase (PEPS) by catalyzing its phosphorylation/dephosphorylation. The sequence is that of Putative phosphoenolpyruvate synthase regulatory protein from Methylobacillus flagellatus (strain ATCC 51484 / DSM 6875 / VKM B-1610 / KT).